The sequence spans 575 residues: Hemagglutinin-neuraminidase (575 aa).

Residues 1–10 are compositionally biased toward basic and acidic residues; that stretch reads MDGDRSKRDS. Residues 1 to 25 are disordered; the sequence is MDGDRSKRDSYWSTSPGGSTTKLVS. At 1 to 37 the chain is on the intravirion side; that stretch reads MDGDRSKRDSYWSTSPGGSTTKLVSDSERSGKVDTWL. Residues 10-14 are incorporation in virion; the sequence is SYWST. The segment covering 11 to 24 has biased composition (polar residues); sequence YWSTSPGGSTTKLV. The chain crosses the membrane as a helical span at residues 38 to 58; it reads LILAFTQWALSIATVIICIVI. Positions 59-140 are involved in interaction with F protein; sequence AARQGYSMER…RQELTQLCDS (82 aa). Over 59–575 the chain is Virion surface; that stretch reads AARQGYSMER…SIPKLCKAES (517 aa). N-linked (GlcNAc...) asparagine; by host glycosylation occurs at Asn-77. Intrachain disulfides connect Cys-192–Cys-216, Cys-258–Cys-271, Cys-357–Cys-469, and Cys-463–Cys-473. Residues 254 to 259 are involved in neuraminidase activity; it reads NRKSCS. N-linked (GlcNAc...) asparagine; by host glycans are attached at residues Asn-499 and Asn-511. A disulfide bridge connects residues Cys-535 and Cys-544.

It belongs to the paramyxoviruses hemagglutinin-neuraminidase family. Homotetramer; composed of disulfide-linked homodimers. Interacts with F protein trimer. N-glycosylated; glycans consist of a mixture of high mannose-type oligosaccharides and of complex-type oligosaccharides.

Its subcellular location is the virion membrane. The protein localises to the host cell membrane. The enzyme catalyses Hydrolysis of alpha-(2-&gt;3)-, alpha-(2-&gt;6)-, alpha-(2-&gt;8)- glycosidic linkages of terminal sialic acid residues in oligosaccharides, glycoproteins, glycolipids, colominic acid and synthetic substrates.. Attaches the virus to sialic acid-containing cell receptors and thereby initiating infection. Binding of HN protein to the receptor induces a conformational change that allows the F protein to trigger virion/cell membranes fusion. Functionally, neuraminidase activity ensures the efficient spread of the virus by dissociating the mature virions from the neuraminic acid containing glycoproteins. This chain is Hemagglutinin-neuraminidase (HN), found in Cavia cutleri (Guinea pig).